Consider the following 477-residue polypeptide: MRWNQVDPQAHVEVLVVGISGNQPVEERIRSLYPDRLDEWVRRGDISTKQGELRLLPTLTGTVERVLFVGLGKAEGLTTDGLRRLFGKAAQFLKARQLSKVTIDATTFPDQPVELIAETFGLSTYEVKHYKTNTRATYDLDVTIWSDAGEQAVERGAALAQATNLARRLVTMPGNLLTAPALADEARFIAERHGHELKILEKADMEALGMGALLAVNQGSTIPPKLIVLEYKGAGDDAPIAVVGKGVTFDTGGYSIKPKDGIVGMKGDMGGAAAVLGLFEALGHLKPNVNVLGVIPATDNMISGDAFKPDDVITSMAGKTIEILNTDAEGRLVLADAVTYAKEYKPKMIIDLATLTGGVLVALGTEITGALTNDAGLYERFEAVTKETNEMVWQMPYVDQFIKQVRRSDVADLNNSPGRMGHMIFGGAFVGEFVGDTPWLHLDIAGTSEQKAATELGPKGATGVMVRSLYHFVEREK.

2 residues coordinate Mn(2+): K245 and D250. Residue K257 is part of the active site. Mn(2+) is bound by residues D268, D327, and E329. Residue R331 is part of the active site.

Belongs to the peptidase M17 family. Mn(2+) is required as a cofactor.

It localises to the cytoplasm. It carries out the reaction Release of an N-terminal amino acid, Xaa-|-Yaa-, in which Xaa is preferably Leu, but may be other amino acids including Pro although not Arg or Lys, and Yaa may be Pro. Amino acid amides and methyl esters are also readily hydrolyzed, but rates on arylamides are exceedingly low.. The catalysed reaction is Release of an N-terminal amino acid, preferentially leucine, but not glutamic or aspartic acids.. Presumably involved in the processing and regular turnover of intracellular proteins. Catalyzes the removal of unsubstituted N-terminal amino acids from various peptides. This chain is Probable cytosol aminopeptidase, found in Exiguobacterium sibiricum (strain DSM 17290 / CCUG 55495 / CIP 109462 / JCM 13490 / 255-15).